The sequence spans 414 residues: Enolase (414 aa).

Q162 serves as a coordination point for (2R)-2-phosphoglycerate. The Proton donor role is filled by E204. Mg(2+)-binding residues include D239, E280, and D307. Residues K332, R361, S362, and K383 each contribute to the (2R)-2-phosphoglycerate site. The active-site Proton acceptor is the K332.

It belongs to the enolase family. Requires Mg(2+) as cofactor.

It localises to the cytoplasm. The protein resides in the secreted. The protein localises to the cell surface. It catalyses the reaction (2R)-2-phosphoglycerate = phosphoenolpyruvate + H2O. It functions in the pathway carbohydrate degradation; glycolysis; pyruvate from D-glyceraldehyde 3-phosphate: step 4/5. Functionally, catalyzes the reversible conversion of 2-phosphoglycerate (2-PG) into phosphoenolpyruvate (PEP). It is essential for the degradation of carbohydrates via glycolysis. This Campylobacter jejuni subsp. jejuni serotype O:2 (strain ATCC 700819 / NCTC 11168) protein is Enolase.